A 303-amino-acid polypeptide reads, in one-letter code: Cobalamin biosynthesis protein CobD (303 aa).

4 consecutive transmembrane segments (helical) span residues 65 to 85 (LLAW…IVLL), 147 to 167 (DAVF…VVLY), 235 to 255 (AGPV…GAAI), and 283 to 303 (LVWA…WLYA).

This sequence belongs to the CobD/CbiB family.

The protein resides in the cell membrane. Its pathway is cofactor biosynthesis; adenosylcobalamin biosynthesis. Functionally, converts cobyric acid to cobinamide by the addition of aminopropanol on the F carboxylic group. The protein is Cobalamin biosynthesis protein CobD of Stutzerimonas stutzeri (strain A1501) (Pseudomonas stutzeri).